The following is a 495-amino-acid chain: ESX-2 secretion system ATPase EccB2 (495 aa).

The helical transmembrane segment at 43–63 (LALSMVLVAIAAGWMMLLNVL) threads the bilayer.

It belongs to the EccB family. As to quaternary structure, part of the ESX-2 / type VII secretion system (T7SS), which is composed of cytosolic and membrane components.

The protein localises to the cell membrane. Functionally, an ATPase. The protein is ESX-2 secretion system ATPase EccB2 (eccB2) of Mycobacterium tuberculosis (strain CDC 1551 / Oshkosh).